A 245-amino-acid chain; its full sequence is 1-(5-phosphoribosyl)-5-[(5-phosphoribosylamino)methylideneamino] imidazole-4-carboxamide isomerase (245 aa).

Asp-8 serves as the catalytic Proton acceptor. Asp-129 functions as the Proton donor in the catalytic mechanism.

This sequence belongs to the HisA/HisF family.

Its subcellular location is the cytoplasm. The enzyme catalyses 1-(5-phospho-beta-D-ribosyl)-5-[(5-phospho-beta-D-ribosylamino)methylideneamino]imidazole-4-carboxamide = 5-[(5-phospho-1-deoxy-D-ribulos-1-ylimino)methylamino]-1-(5-phospho-beta-D-ribosyl)imidazole-4-carboxamide. It functions in the pathway amino-acid biosynthesis; L-histidine biosynthesis; L-histidine from 5-phospho-alpha-D-ribose 1-diphosphate: step 4/9. This chain is 1-(5-phosphoribosyl)-5-[(5-phosphoribosylamino)methylideneamino] imidazole-4-carboxamide isomerase, found in Rhodopseudomonas palustris (strain ATCC BAA-98 / CGA009).